The following is a 340-amino-acid chain: Tetrathionate reductase subunit C (340 aa).

Helical transmembrane passes span 19–39 (WLPW…AALF), 57–77 (ALLI…ADLH), 94–114 (WMPW…LWFL), 128–148 (VTKW…IYTG), 164–184 (AFPV…MIVA), 195–215 (ILWG…MWVS), 236–256 (YYAV…SLAL), 266–286 (VLLV…LLIQ), and 306–326 (TDGW…LIII).

Belongs to the NrfD family. In terms of assembly, probably composed of three subunits: TtrA, TtrB and TtrC.

The protein localises to the cell inner membrane. Part of a membrane-bound tetrathionate reductase that catalyzes the reduction of tetrathionate to thiosulfate. TtrC probably anchors TtrA and TtrB to the periplasmic face of the cytoplasmic membrane. May transfer electrons from membrane quinol to TtrB. During mice infection, the ability to use tetrathionate as an electron acceptor is a growth advantage for S.typhimurium over the competing microbiota in the lumen of the inflamed gut. This Salmonella typhimurium (strain LT2 / SGSC1412 / ATCC 700720) protein is Tetrathionate reductase subunit C (ttrC).